The primary structure comprises 332 residues: Iron-utilization periplasmic protein (332 aa).

The N-terminal stretch at 1–23 is a signal peptide; sequence MQFKHFKLATLAAALAFSANSFA. Fe cation is bound by residues histidine 32, glutamate 80, tyrosine 218, and tyrosine 219.

This sequence belongs to the bacterial solute-binding protein 1 family. The complex is composed of two ATP-binding proteins (FbpC), two transmembrane proteins (FbpB) and a solute-binding protein (FbpA).

Its subcellular location is the periplasm. Its function is as follows. Part of the ABC transporter complex FbpABC (TC 3.A.1.10.1) involved in Fe(3+) ions import. This protein specifically binds Fe(3+) and is involved in its transmembrane transport. The chain is Iron-utilization periplasmic protein (fbpA) from Haemophilus influenzae (strain ATCC 51907 / DSM 11121 / KW20 / Rd).